The following is a 239-amino-acid chain: DnaA regulatory inactivator Hda (239 aa).

This sequence belongs to the DnaA family. HdA subfamily. As to quaternary structure, the active form seems to be an ADP-bound monomer. Forms the RIDA complex (regulatory inactivation of DnaA) of ATP-DnaA, ADP-Hda and the DNA-loaded beta sliding clamp (dnaN).

Functionally, mediates the interaction of DNA replication initiator protein DnaA with DNA polymerase subunit beta sliding clamp (dnaN). Stimulates hydrolysis of ATP-DnaA to ADP-DnaA, rendering DnaA inactive for reinitiation, a process called regulatory inhibition of DnaA or RIDA. The sequence is that of DnaA regulatory inactivator Hda from Yersinia pseudotuberculosis serotype O:1b (strain IP 31758).